A 430-amino-acid polypeptide reads, in one-letter code: Lipoyl synthase, mitochondrial (430 aa).

A mitochondrion-targeting transit peptide spans 1 to 37 (MAASTGKLRTLFSAHSSLSARPSSALPALRLTILRSY). The segment covering 40 to 56 (TTPPDSSISNPSNPSTT) has biased composition (low complexity). The tract at residues 40-64 (TTPPDSSISNPSNPSTTVKRPPTAF) is disordered. Positions 141, 146, 152, 172, 176, 179, and 387 each coordinate [4Fe-4S] cluster. The Radical SAM core domain maps to 155-376 (GSSKSAATAT…KERALEMGFL (222 aa)).

This sequence belongs to the radical SAM superfamily. Lipoyl synthase family. [4Fe-4S] cluster is required as a cofactor.

It localises to the mitochondrion. The catalysed reaction is [[Fe-S] cluster scaffold protein carrying a second [4Fe-4S](2+) cluster] + N(6)-octanoyl-L-lysyl-[protein] + 2 oxidized [2Fe-2S]-[ferredoxin] + 2 S-adenosyl-L-methionine + 4 H(+) = [[Fe-S] cluster scaffold protein] + N(6)-[(R)-dihydrolipoyl]-L-lysyl-[protein] + 4 Fe(3+) + 2 hydrogen sulfide + 2 5'-deoxyadenosine + 2 L-methionine + 2 reduced [2Fe-2S]-[ferredoxin]. It participates in protein modification; protein lipoylation via endogenous pathway; protein N(6)-(lipoyl)lysine from octanoyl-[acyl-carrier-protein]: step 2/2. Its function is as follows. Catalyzes the radical-mediated insertion of two sulfur atoms into the C-6 and C-8 positions of the octanoyl moiety bound to the lipoyl domains of lipoate-dependent enzymes, thereby converting the octanoylated domains into lipoylated derivatives. This is Lipoyl synthase, mitochondrial from Blastomyces gilchristii (strain SLH14081) (Blastomyces dermatitidis).